A 200-amino-acid chain; its full sequence is MPRQLLAHVCQVVPGNEHRAVRYEFVEKHGHAGPGLAVLRLRKVLPRFTRRDDIPQPSANLRRVPALAKQKHLQALLRLMRPGESRGLRAGHRHPIQRCVQVLAYVVRELAPAELAKRENHEHVIEPARVWRLVLLLPARTYVRAVRASLPQRVPASHIWHEAFVTEIYRGCLDTLRVGQTGEAQHIGDRWYFRIHKHSR.

This is an uncharacterized protein from Amazona oratrix (yellow-headed parrot).